The following is a 372-amino-acid chain: Cytochrome b (372 aa).

4 helical membrane-spanning segments follow: residues 25 to 45, 69 to 90, 105 to 125, and 170 to 190; these read FGSMLLTCLALQTMTGFFLAI, WMMQNLHAIGASMFFICIYIHI, WLSGTTLLIILMATAFFGYVL, and FFALHFILPFTIISMSSIHIM. Residues His75 and His89 each coordinate heme b. Residues His174 and His188 each contribute to the heme b site. Residue His193 coordinates a ubiquinone. A run of 4 helical transmembrane segments spans residues 218–238, 280–300, 312–332, and 339–358; these read HKDMLMLTIMMTALFIIMSFN, LGGAVALVLSVTILMTMPFTH, LMQFMFWTLVTTFIMITWAAT, and FTTIGQVTSILYFTFFIMNP.

Belongs to the cytochrome b family. In terms of assembly, the cytochrome bc1 complex contains 3 respiratory subunits (MT-CYB, CYC1 and UQCRFS1), 2 core proteins (UQCRC1 and UQCRC2) and probably 6 low-molecular weight proteins. Requires heme b as cofactor.

The protein localises to the mitochondrion inner membrane. Functionally, component of the ubiquinol-cytochrome c reductase complex (complex III or cytochrome b-c1 complex) that is part of the mitochondrial respiratory chain. The b-c1 complex mediates electron transfer from ubiquinol to cytochrome c. Contributes to the generation of a proton gradient across the mitochondrial membrane that is then used for ATP synthesis. This chain is Cytochrome b (MT-CYB), found in Pantherophis bairdi (Baird's ratsnake).